The primary structure comprises 129 residues: MAKPAARPRKKIKKTVVDGIAHIHASFNNTIVTITDRQGNALSWATSGGSGFRGSRKSTPFAAQIAAERAGQAALEYGLKNLDVNVKGPGPGRESAVRALNSCGYKIASITDVTPIPHNGCRPPKKRRV.

It belongs to the universal ribosomal protein uS11 family. As to quaternary structure, part of the 30S ribosomal subunit. Interacts with proteins S7 and S18. Binds to IF-3.

Its function is as follows. Located on the platform of the 30S subunit, it bridges several disparate RNA helices of the 16S rRNA. Forms part of the Shine-Dalgarno cleft in the 70S ribosome. This chain is Small ribosomal subunit protein uS11, found in Pseudomonas putida (strain GB-1).